Reading from the N-terminus, the 108-residue chain is Small ribosomal subunit protein bS16 (108 aa).

The interval Glu82–Asn108 is disordered. Residues Pro96–Asn108 show a composition bias toward basic residues.

Belongs to the bacterial ribosomal protein bS16 family.

The protein is Small ribosomal subunit protein bS16 of Mycoplasma capricolum subsp. capricolum (strain California kid / ATCC 27343 / NCTC 10154).